We begin with the raw amino-acid sequence, 554 residues long: Exodeoxyribonuclease 7 large subunit (554 aa).

The protein belongs to the XseA family. In terms of assembly, heterooligomer composed of large and small subunits.

It localises to the cytoplasm. It catalyses the reaction Exonucleolytic cleavage in either 5'- to 3'- or 3'- to 5'-direction to yield nucleoside 5'-phosphates.. Functionally, bidirectionally degrades single-stranded DNA into large acid-insoluble oligonucleotides, which are then degraded further into small acid-soluble oligonucleotides. This is Exodeoxyribonuclease 7 large subunit from Chlamydia pneumoniae (Chlamydophila pneumoniae).